Reading from the N-terminus, the 551-residue chain is Arginine--tRNA ligase (551 aa).

A 'HIGH' region motif is present at residues 125-135; it reads ANPTGPLHIGH.

The protein belongs to the class-I aminoacyl-tRNA synthetase family. Monomer.

The protein localises to the cytoplasm. The catalysed reaction is tRNA(Arg) + L-arginine + ATP = L-arginyl-tRNA(Arg) + AMP + diphosphate. This is Arginine--tRNA ligase from Nitratidesulfovibrio vulgaris (strain DSM 19637 / Miyazaki F) (Desulfovibrio vulgaris).